Consider the following 1747-residue polypeptide: MNWNEKPKSATLPPLYPKSQPPFLHQSLINQITTTSQSSFSYPGSNQEACMYPGNSNPISQPLLNIQNYPQQISVSDMHNGTVVASHTSVERITYANVNGPKQLTHNLQMSSGVTQNVWLNSPMRNPVHSHIGATVSHQTDFGANVPNMPALQSQLITSDTYSMQMQMIPSNSTRLPVAYQGNQGLNQSFSEQQVDWTQQCISKGLTYPDYRPPPKLYRYSPQSFLPDSTIQKQNFIPHTSLQVKNSQLLNSVLTLPSRQTSAVPSQQYATQTDKRPPPPPYNCRYGSQPLQSTQHITKHLSMEVPQSREMLSSEIRTSFQQQWQNPNENVSTIGNFTNLKVNTNSKQPFNSPIRSSVDGVQTLAQTNEEKIMDSCNPTSNQVLDTSVAKEKLVRDIKTLVEIKQKFSELARKIKINKDLLMAAGCIKMTNTSYSEPAQNSKLSLKQTAKIQSGPQITPVMPENAERQTPTVVESAETNKTQCMLNSDIQEVNCRRFNQVDSVLPNPVYSEKRPMPDSSHDVKVLTSKTSAVEMTQAVLNTQLSSENVTKVEQNSPAVCETISVPKSMSTEEYKSKIQNENMLLLALLSQARKTQKTVLKDANQTIQDSKPDSCEMNPNTQMTGNQLNLKNMETPSTSNVSGRVLDNSFCSGQESSTKGMPAKSDSSCSMEVLATCLSLWKKQPSDTAKEKECDKLRTNTTAVGISKPANIHVKSPCSVVGNSNSQNKISNPSQQTALSMVMHNYESSGINITKGTELQIAVVSPLVLSEVKTLSVKGITPAVLPETVYPVIKEGSVCSLQNQLAENAKATAALKVDVSGPVASTATSTKIFPLTQKEKQNESTNGNSEVTPNVNQGKHNKLESAIHSPMNDQQISQESRNSTVVSSDTLQIDNICSLVEGDTSYNSQIAKIFSSLPLKMVEPQKPSLPNQQGIGSREPEKQLDNTTENKDFGFQKDKPVQCTDVSHKICDQSKSEPPLESSFNNLETNRVILEKSSLEHATEKSTANDTCSSAAIQEDIYPQEIDASSNYTPQDPARNEIHSDKAPVLYLHDQLSELLKEFPYGIEAVNTREGSVGQQTTYQTSEDQTADKTSSDSKDPADQIQITILSSEQMKEIFPEQDDQPYVVDKLAEPQKEEPITEVVSQCDLQAPAAGQSRDSVILDSEKDDIHCCALGWLSMVYEGVPQCQCNSIKNSSSEEEKQKEQCSPLDTNSCKQGERTSDRDVTVVQFKSLVNNPKTPPDGKSHFPELQDDSRKDTPKTKHKSLPRTEQELVAGQFSSKCDKLNPLQNHKRKKLRFHEVTFHSSNKMTASYEQASQETRQKKHVTQNSRPLKTKTAFLPNKDVYKKHSSLGQSLSPEKIKLKLKSVSFKQKRKLDQGNVLDMEVKKKKHDKQEQKGSVGATFKLGDSLSNPNERAIVKEKMVSNTKSVDTKASSSKFSRILTPKEYLQRQKHKEALSNKASKKICVKNVPCDSEHMRPSKLAVQVESCGKSNEKHSSGVQTSKESLNGLTSHGKNLKIHHSQESKTYNILRNVKEKVGGKQPDKIWIDKTKLDKLTNISNEAQFSQMPPQVKDQKKLYLNRVGFKCTERESISLTKLESSPRKLHKDKRQENKHKTFLPVKGNTEKSNMLEFKLCPDILLKNTNSVEERKDVKPHPRKEQAPLQVSGIKSTKEDWLKFVATKKRTQKDSQERDNVNSRLSKRSFSADGFEMLQNPVKDSKEMFQTYKQMYLEKRSRSLGSSPVK.

K216 participates in a covalent cross-link: Glycyl lysine isopeptide (Lys-Gly) (interchain with G-Cter in SUMO2). The residue at position 221 (S221) is a Phosphoserine. The span at 261–272 (TSAVPSQQYATQ) shows a compositional bias: polar residues. The segment at 261 to 280 (TSAVPSQQYATQTDKRPPPP) is disordered. A Glycyl lysine isopeptide (Lys-Gly) (interchain with G-Cter in SUMO2) cross-link involves residue K707. 3 disordered regions span residues 833–856 (PLTQ…NVNQ), 923–956 (PQKP…GFQK), and 1073–1101 (EGSV…KDPA). Residues 842-856 (ESTNGNSEVTPNVNQ) show a composition bias toward polar residues. Residues 937 to 956 (REPEKQLDNTTENKDFGFQK) show a composition bias toward basic and acidic residues. The span at 1073–1087 (EGSVGQQTTYQTSED) shows a compositional bias: polar residues. Basic and acidic residues predominate over residues 1089-1101 (TADKTSSDSKDPA). K1136 is covalently cross-linked (Glycyl lysine isopeptide (Lys-Gly) (interchain with G-Cter in SUMO2)). At S1145 the chain carries Phosphoserine. A disordered region spans residues 1200–1274 (EEKQKEQCSP…KSLPRTEQEL (75 aa)). The span at 1217-1226 (QGERTSDRDV) shows a compositional bias: basic and acidic residues. Phosphothreonine is present on T1240. Residues 1242–1261 (PDGKSHFPELQDDSRKDTPK) show a composition bias toward basic and acidic residues. S1358 bears the Phosphoserine mark. Glycyl lysine isopeptide (Lys-Gly) (interchain with G-Cter in SUMO2) cross-links involve residues K1528 and K1636. Residues 1686–1716 (KRTQKDSQERDNVNSRLSKRSFSADGFEMLQ) are disordered. Over residues 1689–1698 (QKDSQERDNV) the composition is skewed to basic and acidic residues. S1708 is modified (phosphoserine). A Glycyl lysine isopeptide (Lys-Gly) (interchain with G-Cter in SUMO2) cross-link involves residue K1723. S1740 carries the post-translational modification Phosphoserine.

In terms of assembly, interacts with SETDB1.

Its subcellular location is the nucleus. Functionally, plays a role in the regulation of imprinted gene expression, regulates repressive epigenetic modifications associated with SETDB1. Required for the recruitment or accumulation of SETDB1 to the endogenous retroviruses (ERVs) and maintenance of repressive chromatin configuration, contributing to a subset of the SETDB1-dependent ERV silencing in embryonic stem cells. The chain is Retroelement silencing factor 1 from Homo sapiens (Human).